A 504-amino-acid chain; its full sequence is Maturase K (504 aa).

Belongs to the intron maturase 2 family. MatK subfamily.

It is found in the plastid. Its subcellular location is the chloroplast. Functionally, usually encoded in the trnK tRNA gene intron. Probably assists in splicing its own and other chloroplast group II introns. The chain is Maturase K from Wollastonia biflora (Beach sunflower).